Reading from the N-terminus, the 642-residue chain is MTVRRLESKSEHISDDEERKEQLDYKKQMDVDTDRNIVLNGRLESQIAKLSVPPHEMRVVDDYSNSKNAERHSGEIQAYAKFAGSTWTYYVKKIRIILGREPANPSPKGKNEDLEVIDMNFGPSKVVSRKHAVVEYDLDDQTWNCSVYGRNGIKVDGKLFKNGETVKLTSGSILEVAGLQMMFVLPNAAEQKQTDESTIKEDAIKSEISAAVNDAAEYGDNKKPPYSYSVMIAQAILSSSECMMTLSNIYSWISTHYPYYRTTKSGWQNSIRHNLSLNKAFRKVPRKSGEQGKGMKWSIVPEFREEFIAKTRKTPRKRSPSSPVPLLAKKREGSPSLPIPILPKMKDTSIPAAEPASSTTSARDQTPSTPKDVGSPSTAETSAEEKQMETYKTPTHAALSDIISTHDYALDANSASQTKKAAFGSPIGSSTYPTSSPAPFWKYVAVPNPHDWPQVGSYDTISPYRNPVNSHLIYSQIQQSSPKKIDEQLHDLQGVDLVNGFEGISSWRESMVNKLRSSVSDSPTMNLANSNSKSSPVAVQRVSTLPQASANKQAKEMESKMSNSPTQKSKTEENNQAVRAILDASATMEKQYDLHRLPTPTSQTESASVPQIANPPNSQNLVKEKSPQQYIQVPQSNVKSSA.

The disordered stretch occupies residues 1 to 23 (MTVRRLESKSEHISDDEERKEQL). Residues 96–160 (IILGREPANP…NGIKVDGKLF (65 aa)) enclose the FHA domain. A DNA-binding region (fork-head) is located at residues 223–318 (KPPYSYSVMI…AKTRKTPRKR (96 aa)). Residues 310–319 (KTRKTPRKRS) are compositionally biased toward basic residues. 3 disordered regions span residues 310–392 (KTRK…ETYK), 519–574 (VSDS…TEEN), and 586–642 (ATME…KSSA). Serine 319, serine 321, serine 322, serine 334, and serine 336 each carry phosphoserine. Low complexity predominate over residues 348 to 362 (TSIPAAEPASSTTSA). Composition is skewed to polar residues over residues 363-381 (RDQTPSTPKDVGSPSTAET), 519-552 (VSDSPTMNLANSNSKSSPVAVQRVSTLPQASANK), and 599-642 (TPTS…KSSA). A phosphoserine mark is found at serine 375, serine 535, and serine 626.

Post-translationally, phosphorylated. Occurs periodically during mitosis.

The protein resides in the nucleus. Functionally, required for promoter sequence element PCB-driven, M-phase-specific transcription. Acts as a transcriptional activator with a role in the regulation of mitosis. Binds, cooperatively with mcm1, the CLB cluster regulatory elements throughout the cell cycle. Regulates the periodic transcription of cdc15 and spo12. Required for the correct timing, positioning and contraction of the division septum. The polypeptide is Fork head protein homolog 2 (fkh2) (Schizosaccharomyces pombe (strain 972 / ATCC 24843) (Fission yeast)).